The sequence spans 299 residues: tRNA-cytidine(32) 2-sulfurtransferase (299 aa).

The PP-loop motif signature appears at 56–61 (SGGKDS). Positions 131, 134, and 222 each coordinate [4Fe-4S] cluster.

The protein belongs to the TtcA family. Homodimer. The cofactor is Mg(2+). [4Fe-4S] cluster serves as cofactor.

It localises to the cytoplasm. It carries out the reaction cytidine(32) in tRNA + S-sulfanyl-L-cysteinyl-[cysteine desulfurase] + AH2 + ATP = 2-thiocytidine(32) in tRNA + L-cysteinyl-[cysteine desulfurase] + A + AMP + diphosphate + H(+). The protein operates within tRNA modification. Its function is as follows. Catalyzes the ATP-dependent 2-thiolation of cytidine in position 32 of tRNA, to form 2-thiocytidine (s(2)C32). The sulfur atoms are provided by the cysteine/cysteine desulfurase (IscS) system. This is tRNA-cytidine(32) 2-sulfurtransferase from Xylella fastidiosa (strain M12).